The sequence spans 364 residues: Selenide, water dikinase (364 aa).

The active site involves selenocysteine 25. Position 25 (selenocysteine 25) is a non-standard amino acid, selenocysteine. Residues lysine 28, 46–48 (GYD), aspartate 66, aspartate 89, and 141–143 (GQT) contribute to the ATP site. Residue aspartate 48 participates in Mg(2+) binding. Aspartate 89 contributes to the Mg(2+) binding site. Position 244 (aspartate 244) interacts with Mg(2+).

The protein belongs to the selenophosphate synthase 1 family. Class II subfamily. Homodimer. The cofactor is Mg(2+).

It catalyses the reaction hydrogenselenide + ATP + H2O = selenophosphate + AMP + phosphate + 2 H(+). In terms of biological role, synthesizes selenophosphate from selenide and ATP. This is Selenide, water dikinase (selD) from Dictyostelium discoideum (Social amoeba).